Here is a 182-residue protein sequence, read N- to C-terminus: Protein Syd (182 aa).

This sequence belongs to the Syd family.

It localises to the cell inner membrane. In terms of biological role, interacts with the SecY protein in vivo. May bind preferentially to an uncomplexed state of SecY, thus functioning either as a chelating agent for excess SecY in the cell or as a regulatory factor that negatively controls the translocase function. The protein is Protein Syd of Aliivibrio salmonicida (strain LFI1238) (Vibrio salmonicida (strain LFI1238)).